The primary structure comprises 454 residues: Argininosuccinate synthase (454 aa).

Residues 17 to 25 (AFSGGLDTS) and Ala-43 each bind ATP. Tyr-99 contributes to the L-citrulline binding site. The ATP site is built by Gly-129 and Thr-131. Residues Thr-131, Asn-135, and Asp-136 each contribute to the L-aspartate site. An L-citrulline-binding site is contributed by Asn-135. ATP is bound at residue Asp-136. 2 residues coordinate L-citrulline: Arg-139 and Ser-192. Asp-194 contacts ATP. 3 residues coordinate L-citrulline: Thr-201, Glu-203, and Glu-280.

Belongs to the argininosuccinate synthase family. Type 2 subfamily. In terms of assembly, homotetramer.

The protein localises to the cytoplasm. The enzyme catalyses L-citrulline + L-aspartate + ATP = 2-(N(omega)-L-arginino)succinate + AMP + diphosphate + H(+). The protein operates within amino-acid biosynthesis; L-arginine biosynthesis; L-arginine from L-ornithine and carbamoyl phosphate: step 2/3. This is Argininosuccinate synthase from Yersinia enterocolitica serotype O:8 / biotype 1B (strain NCTC 13174 / 8081).